The following is a 343-amino-acid chain: Selenide, water dikinase (343 aa).

Sec13 is a catalytic residue. Residue Sec13 is a non-standard amino acid, selenocysteine. ATP contacts are provided by residues Lys16 and 44–46 (TAD). A Mg(2+)-binding site is contributed by Asp47. Residues Asp64, Asp87, and 135-137 (GHT) contribute to the ATP site. Asp87 provides a ligand contact to Mg(2+). Asp223 serves as a coordination point for Mg(2+).

The protein belongs to the selenophosphate synthase 1 family. Class I subfamily. In terms of assembly, homodimer. Requires Mg(2+) as cofactor.

The enzyme catalyses hydrogenselenide + ATP + H2O = selenophosphate + AMP + phosphate + 2 H(+). Functionally, synthesizes selenophosphate from selenide and ATP. This Geobacter metallireducens (strain ATCC 53774 / DSM 7210 / GS-15) protein is Selenide, water dikinase.